The sequence spans 160 residues: uncharacterized protein (160 aa).

Residues 2-140 (MIIIPNNEIA…KARRLKPEIP (139 aa)) form the N-acetyltransferase domain.

This is an uncharacterized protein from Bacillus subtilis (strain 168).